The chain runs to 295 residues: Ribosomal protein L11 methyltransferase (295 aa).

4 residues coordinate S-adenosyl-L-methionine: Thr-146, Gly-167, Asp-189, and Asn-231.

This sequence belongs to the methyltransferase superfamily. PrmA family.

The protein localises to the cytoplasm. The catalysed reaction is L-lysyl-[protein] + 3 S-adenosyl-L-methionine = N(6),N(6),N(6)-trimethyl-L-lysyl-[protein] + 3 S-adenosyl-L-homocysteine + 3 H(+). Its function is as follows. Methylates ribosomal protein L11. The polypeptide is Ribosomal protein L11 methyltransferase (Vibrio parahaemolyticus serotype O3:K6 (strain RIMD 2210633)).